The sequence spans 90 residues: RNA-binding protein Hfq (90 aa).

Residues 9–68 (DPFLNALRRERVPVSIYLVNGIKLQGQVESFDQFVILLKNTVSQMVYKHAISTVVPARPF) enclose the Sm domain.

It belongs to the Hfq family. In terms of assembly, homohexamer.

In terms of biological role, RNA chaperone that binds small regulatory RNA (sRNAs) and mRNAs to facilitate mRNA translational regulation in response to envelope stress, environmental stress and changes in metabolite concentrations. Also binds with high specificity to tRNAs. This Shewanella baltica (strain OS155 / ATCC BAA-1091) protein is RNA-binding protein Hfq.